A 580-amino-acid chain; its full sequence is Threonine--tRNA ligase (580 aa).

The tract at residues 179-476 is catalytic; it reads DHRKIGKDLN…LLEQTKGILP (298 aa). Zn(2+) is bound by residues Cys272, His323, and His453.

This sequence belongs to the class-II aminoacyl-tRNA synthetase family. Homodimer. Zn(2+) serves as cofactor.

Its subcellular location is the cytoplasm. The catalysed reaction is tRNA(Thr) + L-threonine + ATP = L-threonyl-tRNA(Thr) + AMP + diphosphate + H(+). Functionally, catalyzes the attachment of threonine to tRNA(Thr) in a two-step reaction: L-threonine is first activated by ATP to form Thr-AMP and then transferred to the acceptor end of tRNA(Thr). Also edits incorrectly charged L-seryl-tRNA(Thr). The sequence is that of Threonine--tRNA ligase from Ureaplasma parvum serovar 3 (strain ATCC 27815 / 27 / NCTC 11736).